The sequence spans 303 residues: Peroxisomal trans-2-enoyl-CoA reductase (303 aa).

23–47 (VTGGATGIGKAIVKELLELGSNVVI) provides a ligand contact to NADP(+). An N6-succinyllysine modification is found at Lys32. Ser49 bears the Phosphoserine mark. The active-site Proton acceptor is the Tyr179. Tyr179 bears the Phosphotyrosine mark. The Microbody targeting signal signature appears at 301 to 303 (AKL).

The protein belongs to the short-chain dehydrogenases/reductases (SDR) family. In terms of assembly, interacts with PEX5, probably required to target it into peroxisomes.

The protein localises to the peroxisome. It catalyses the reaction a (2E)-enoyl-CoA + NADPH + H(+) = a 2,3-saturated acyl-CoA + NADP(+). The catalysed reaction is (2E)-hexenoyl-CoA + NADPH + H(+) = hexanoyl-CoA + NADP(+). The enzyme catalyses (2E)-octenoyl-CoA + NADPH + H(+) = octanoyl-CoA + NADP(+). It carries out the reaction (2E)-decenoyl-CoA + NADPH + H(+) = decanoyl-CoA + NADP(+). It catalyses the reaction (2E)-dodecenoyl-CoA + NADPH + H(+) = dodecanoyl-CoA + NADP(+). The catalysed reaction is (2E)-tetradecenoyl-CoA + NADPH + H(+) = tetradecanoyl-CoA + NADP(+). It participates in lipid metabolism; fatty acid biosynthesis. Its function is as follows. Participates in chain elongation of fatty acids. Catalyzes the reduction of trans-2-enoyl-CoAs of varying chain lengths from 6:1 to 16:1, having maximum activity with 10:1 CoA. Has no 2,4-dienoyl-CoA reductase activity. This is Peroxisomal trans-2-enoyl-CoA reductase (PECR) from Pongo abelii (Sumatran orangutan).